Reading from the N-terminus, the 249-residue chain is uncharacterized protein (249 aa).

The first 25 residues, methionine 1 to glycine 25, serve as a signal peptide directing secretion.

This sequence belongs to the periplasmic pilus chaperone family.

It localises to the periplasm. Could be required for the biogenesis of a putative fimbria. This is an uncharacterized protein from Escherichia coli (strain K12).